The primary structure comprises 530 residues: Putative sulfate transporter YvdB (530 aa).

Helical transmembrane passes span 19 to 39, 41 to 61, 68 to 88, 91 to 111, 121 to 141, 164 to 184, 192 to 212, 241 to 261, 313 to 333, and 384 to 404; these read LIAG…FAIA, GVEP…ISLF, IGGP…QYGL, LLIA…FKLG, VIVG…IANF, LGTF…ILLV, VPGA…FFPD, MVML…ESIL, AVSP…LLVF, and VLFD…VFFI. An STAS domain is found at 420–530; the sequence is PVLAKREDPS…FFDHHDEITG (111 aa).

The protein belongs to the SLC26A/SulP transporter (TC 2.A.53) family.

It localises to the cell membrane. In Bacillus subtilis (strain 168), this protein is Putative sulfate transporter YvdB (yvdB).